The following is a 141-amino-acid chain: Lutropin subunit beta (141 aa).

Residues 1–20 (MEMLQGLLLWLLLSMGGARA) form the signal peptide. 6 disulfide bridges follow: Cys-29–Cys-77, Cys-43–Cys-92, Cys-46–Cys-130, Cys-54–Cys-108, Cys-58–Cys-110, and Cys-113–Cys-120. Asn-33 and Asn-50 each carry an N-linked (GlcNAc...) asparagine glycan.

The protein belongs to the glycoprotein hormones subunit beta family. In terms of assembly, heterodimer of a common alpha chain and a unique beta chain which confers biological specificity to thyrotropin, lutropin, follitropin and gonadotropin.

The protein localises to the secreted. Functionally, promotes spermatogenesis and ovulation by stimulating the testes and ovaries to synthesize steroids. The polypeptide is Lutropin subunit beta (LHB) (Macaca fascicularis (Crab-eating macaque)).